The following is a 671-amino-acid chain: UvrABC system protein B (671 aa).

Residues 31–189 (KGFEEGKKEQ…QLVDIQFDRN (159 aa)) enclose the Helicase ATP-binding domain. 44–51 (GATGTGKT) is an ATP binding site. The short motif at 97 to 120 (YYDYYQPEAYVPSTDTYIEKDSAI) is the Beta-hairpin element. The region spanning 437–599 (QIDDLVGEIN…ITPKTIIKPI (163 aa)) is the Helicase C-terminal domain. Residues 634–669 (KELVANLRSQMQAAAKKLDFEQAASLRDTILELQAD) form the UVR domain.

This sequence belongs to the UvrB family. In terms of assembly, forms a heterotetramer with UvrA during the search for lesions. Interacts with UvrC in an incision complex.

It localises to the cytoplasm. The UvrABC repair system catalyzes the recognition and processing of DNA lesions. A damage recognition complex composed of 2 UvrA and 2 UvrB subunits scans DNA for abnormalities. Upon binding of the UvrA(2)B(2) complex to a putative damaged site, the DNA wraps around one UvrB monomer. DNA wrap is dependent on ATP binding by UvrB and probably causes local melting of the DNA helix, facilitating insertion of UvrB beta-hairpin between the DNA strands. Then UvrB probes one DNA strand for the presence of a lesion. If a lesion is found the UvrA subunits dissociate and the UvrB-DNA preincision complex is formed. This complex is subsequently bound by UvrC and the second UvrB is released. If no lesion is found, the DNA wraps around the other UvrB subunit that will check the other stand for damage. The chain is UvrABC system protein B from Lacticaseibacillus casei (strain BL23) (Lactobacillus casei).